The following is a 185-amino-acid chain: UPF0397 protein CPR_1556 (185 aa).

Helical transmembrane passes span 11 to 31, 44 to 64, 71 to 91, 111 to 131, and 149 to 169; these read IVAIGIGSAVFMILGRFGSLP, AFLSLMALLYGPLAGFLIGFI, IVFFGSPWISWVFASGIVGLI, IFMFNLIQIIANGVAWFLVAP, and GVIGGISNMITVGVLGTVLIS.

This sequence belongs to the UPF0397 family.

The protein resides in the cell membrane. This chain is UPF0397 protein CPR_1556, found in Clostridium perfringens (strain SM101 / Type A).